We begin with the raw amino-acid sequence, 358 residues long: MNADPPRAPRRAPLEAFLTQQWLRRGPVAWALRPLAALYGAAVALRNRRYRLTPGRSVRVGRPVVVIGNRIAGGAGKTPTVIAVLAHLRRQGWQPGVVSRGHGRTALGVQAVAADTPADVVGDEPLLIHLRSGAPVVVGRDRVAAAAALLRARPEIDVIVADDGLQHRRLARDVEVVVFDARGAGNGWLLPAGPLREPIDTPTGAGTALVLYNADRPSTPLPGYATRRALTGAVALAAWWQGTPAAAATLASLRGRPVLACAGIAQPQRFFEQLRHAGLDVQEQALPDHAAFDALPWPAATPDVIVTEKDAVKLPVDRVRRERPGTRVWVAPLDFSPEPAFFAALDTALAPLSPRREG.

71 to 78 (IAGGAGKT) contributes to the ATP binding site.

The protein belongs to the LpxK family.

The enzyme catalyses a lipid A disaccharide + ATP = a lipid IVA + ADP + H(+). It functions in the pathway glycolipid biosynthesis; lipid IV(A) biosynthesis; lipid IV(A) from (3R)-3-hydroxytetradecanoyl-[acyl-carrier-protein] and UDP-N-acetyl-alpha-D-glucosamine: step 6/6. Its function is as follows. Transfers the gamma-phosphate of ATP to the 4'-position of a tetraacyldisaccharide 1-phosphate intermediate (termed DS-1-P) to form tetraacyldisaccharide 1,4'-bis-phosphate (lipid IVA). The polypeptide is Tetraacyldisaccharide 4'-kinase (Methylibium petroleiphilum (strain ATCC BAA-1232 / LMG 22953 / PM1)).